The chain runs to 921 residues: MDYKDTLNLPKTSFSMRANLVRKEPEQLKKWEEMDLYKYVQKNREGAPLFVLHDGPPYANGNIHVGTALNKILKDFIIKYKTMQGYNAPYIPGWDTHGLPIEHRVASELGEKAKELSKSTIRKKCRKYAEKYVKIQREQFKRLGVRGDWENPYLTFDPKYEASVLKVLSKLVKSGNVYRTLKPIYWCTSCETALAEAEVEYHDHKSYSIYVKFQDKNKPNRFFVIWTTTPWTLPANVAIALNPNFDYCEVKVKDEIWILAEGLLEQAMKAMGIESYEIISTKKGSEFEGEVAQHPFMNRDSVIVMADYVALDAGTGCVHTAPGHGEEDYGTGLRYRLPVISPVNDQGIFTKEAGKYAGLFVFDANPIIVEDLRKSGHLVGEGKIEHSYPHCWRCKNPVIFRATEQWFIDVDKNDLRQKALSEIEKTEWHPSWGQNRITAMVQDRPDWCISRQRSWGIPIPAFRCQDCGESILDGKVIDHFAGIVEEKGTDVWFEWSESDLLPEGYTCPKCGSKNLKKQEDILDVWVDSGSSFEAVVKVMDELRFPADVYIEGSDQHRGWFQSSLLLSVGTEGVAPFKSVITHGFINDEQGRKMSKSLGNAVDPQEINNKYGAEILRLWVASSNYQEDIRISMNIIQQQIENYKKIRNTLRYLLGNLSDYSPQDSVPYEELLELDKWAIMKLHKLIRDVTRYYDRYEFYKVFQSILKFIITDMSAFYLDIIKDRLYVEGKTSPERRSAQTVLFEILVALNKMLAPILTFTSEEVYAHLPEAARNYKTIQVENWPEYKEEYIDSSLEERWEKLINLREDVLKALEIARAEKLIGNSLDAKVTLQIRSKDIDEIVRQYSREFIADLFIVSQVEFAESVEGFNGEYAVVKVDRAEGEKCQRCWKYSIETGADPELPDMCPRCVAVLRKYGSDYEL.

A 'HIGH' region motif is present at residues Pro57 to Thr67. An L-isoleucyl-5'-AMP-binding site is contributed by Glu551. The 'KMSKS' region motif lies at Lys592 to Ser596. ATP is bound at residue Lys595. Cys885, Cys888, Cys905, and Cys908 together coordinate Zn(2+).

Belongs to the class-I aminoacyl-tRNA synthetase family. IleS type 1 subfamily. In terms of assembly, monomer. Requires Zn(2+) as cofactor.

It localises to the cytoplasm. The enzyme catalyses tRNA(Ile) + L-isoleucine + ATP = L-isoleucyl-tRNA(Ile) + AMP + diphosphate. Catalyzes the attachment of isoleucine to tRNA(Ile). As IleRS can inadvertently accommodate and process structurally similar amino acids such as valine, to avoid such errors it has two additional distinct tRNA(Ile)-dependent editing activities. One activity is designated as 'pretransfer' editing and involves the hydrolysis of activated Val-AMP. The other activity is designated 'posttransfer' editing and involves deacylation of mischarged Val-tRNA(Ile). The polypeptide is Isoleucine--tRNA ligase (Kosmotoga olearia (strain ATCC BAA-1733 / DSM 21960 / TBF 19.5.1)).